Reading from the N-terminus, the 227-residue chain is PKHD-type hydroxylase CC_0027 (227 aa).

A Fe2OG dioxygenase domain is found at 78–178 (TILSPMFNRY…RTASFFWIQS (101 aa)). Fe cation-binding residues include histidine 96, aspartate 98, and histidine 159. Arginine 169 is a binding site for 2-oxoglutarate.

Requires Fe(2+) as cofactor. It depends on L-ascorbate as a cofactor.

The sequence is that of PKHD-type hydroxylase CC_0027 from Caulobacter vibrioides (strain ATCC 19089 / CIP 103742 / CB 15) (Caulobacter crescentus).